The primary structure comprises 227 residues: Adapter protein MecA 1 (227 aa).

It belongs to the MecA family. Homodimer.

Its function is as follows. Enables the recognition and targeting of unfolded and aggregated proteins to the ClpC protease or to other proteins involved in proteolysis. Acts negatively in the development of competence by binding ComK and recruiting it to the ClpCP protease. When overexpressed, inhibits sporulation. Also involved in Spx degradation by ClpC. The polypeptide is Adapter protein MecA 1 (mecA1) (Bacillus cereus (strain ATCC 14579 / DSM 31 / CCUG 7414 / JCM 2152 / NBRC 15305 / NCIMB 9373 / NCTC 2599 / NRRL B-3711)).